The following is a 114-amino-acid chain: Putative pterin-4-alpha-carbinolamine dehydratase (114 aa).

The protein belongs to the pterin-4-alpha-carbinolamine dehydratase family.

The enzyme catalyses (4aS,6R)-4a-hydroxy-L-erythro-5,6,7,8-tetrahydrobiopterin = (6R)-L-erythro-6,7-dihydrobiopterin + H2O. This is Putative pterin-4-alpha-carbinolamine dehydratase from Chlorobium luteolum (strain DSM 273 / BCRC 81028 / 2530) (Pelodictyon luteolum).